Consider the following 197-residue polypeptide: Holliday junction branch migration complex subunit RuvA (197 aa).

The interval methionine 1–glutamate 64 is domain I. A domain II region spans residues threonine 65–proline 145. The segment at alanine 146 to alanine 148 is flexible linker. The segment at alanine 148–serine 197 is domain III.

This sequence belongs to the RuvA family. As to quaternary structure, homotetramer. Forms an RuvA(8)-RuvB(12)-Holliday junction (HJ) complex. HJ DNA is sandwiched between 2 RuvA tetramers; dsDNA enters through RuvA and exits via RuvB. An RuvB hexamer assembles on each DNA strand where it exits the tetramer. Each RuvB hexamer is contacted by two RuvA subunits (via domain III) on 2 adjacent RuvB subunits; this complex drives branch migration. In the full resolvosome a probable DNA-RuvA(4)-RuvB(12)-RuvC(2) complex forms which resolves the HJ.

The protein localises to the cytoplasm. In terms of biological role, the RuvA-RuvB-RuvC complex processes Holliday junction (HJ) DNA during genetic recombination and DNA repair, while the RuvA-RuvB complex plays an important role in the rescue of blocked DNA replication forks via replication fork reversal (RFR). RuvA specifically binds to HJ cruciform DNA, conferring on it an open structure. The RuvB hexamer acts as an ATP-dependent pump, pulling dsDNA into and through the RuvAB complex. HJ branch migration allows RuvC to scan DNA until it finds its consensus sequence, where it cleaves and resolves the cruciform DNA. The polypeptide is Holliday junction branch migration complex subunit RuvA (Roseiflexus sp. (strain RS-1)).